An 891-amino-acid chain; its full sequence is MALAQWPYLILALLSGLAVSGFPRNPSLLLGKRSLPGRAVDGIEVYSTKVNCKVTSRFAHNVVTTRAVNHANTAKEVSFDVELPKTAFITNFTLTIDGVTYPGKVKEKEVAKKQYEKAVSQGKTAGLVKASGRKLEKFTVSVNVAAGSKVTFELTYEELLKRHKGKYEMYLKVQPKQLVKHFEITVDIFEPQGISTLDAEASFITNDLLGSALTKSFSGKKGHVSFKPSLDQQRSCPTCTDSLLKGDFIITYDVNRESPANVQIVNGYFVHFFAPQGLPVVPKSVVFVIDVSGSMHGRKMEQTKDALLKILEDVKQDDYLNFILFSGDVTTWKDSLVPATPENIQEASKFVMDIQDRGMTNINDALLRGISMLNKAREEHTVPERSTSIIIMLTDGDANVGESRPEKIQENVRNAIGGKFPLYNLGFGNNLNYNFLENMALENHGLARRIYEDSDANLQLQGFYEEVANPLLTGVEVEYPQNAILDLTQNSYQHFYDGSEIVVAGRLADEDMNSFKAAVKGHGAINDLTFTEEVDMKEMEKALQERDYIFGDYIERLWAYLTIEQLLDKRKNAQGEEKEILTAQALELSLKYHFVTPLTSMVVTKPEDNENQTAIANKPGEGPLDAEEVPSMAYLTSYQAPQTPYYYVDGDPHFIIQIPEKDDAICFNIDEDPGTVLRLIQDPVTGLTVNGQIIGEKTGRSDSQTRRTYFGKLGIASAQMDFRIEVTRENITLWNGDSLSTFSWLDTVMVTQDGLSVMINRKKNMVVSFGDGVTFVVVLHQVWKKEPAHHDFLGFYVVNSRGMSAQTHGLLGQFFHPFDFQVSDVHPGSDPTKPDATMVVKNHQLTVTRGSQKDYRKDISVGRNVACWFVHNNGQGLIDGIHRDYIVPNLF.

Residues 1-20 (MALAQWPYLILALLSGLAVS) form the signal peptide. Residues 21–34 (GFPRNPSLLLGKRS) constitute a propeptide that is removed on maturation. The VIT domain occupies 29–158 (LLGKRSLPGR…KVTFELTYEE (130 aa)). A glycan (N-linked (GlcNAc...) asparagine) is linked at N91. A VWFA domain is found at 284 to 467 (SVVFVIDVSG…LQLQGFYEEV (184 aa)). The residue at position 651 (D651) is an Aspartate 1-(chondroitin 4-sulfate)-ester. Residues 652-891 (PHFIIQIPEK…HRDYIVPNLF (240 aa)) constitute a propeptide that is removed on maturation.

Belongs to the ITIH family. In terms of assembly, I-alpha-I plasma protease inhibitors are assembled from one or two heavy chains (H1, H2 or H3) and one light chain, bikunin. Inter-alpha-inhibitor (I-alpha-I) is composed of H1, H2 and bikunin, inter-alpha-like inhibitor (I-alpha-LI) of H2 and bikunin, and pre-alpha-inhibitor (P-alpha-I) of H3 and bikunin.

It localises to the secreted. Its function is as follows. May act as a carrier of hyaluronan in serum or as a binding protein between hyaluronan and other matrix protein, including those on cell surfaces in tissues to regulate the localization, synthesis and degradation of hyaluronan which are essential to cells undergoing biological processes. The chain is Inter-alpha-trypsin inhibitor heavy chain H3 (ITIH3) from Bos taurus (Bovine).